Reading from the N-terminus, the 465-residue chain is Neuraminidase (465 aa).

Topologically, residues 1 to 11 (MLPSTIQTLTL) are intravirion. A helical membrane pass occupies residues 12–34 (FLTSGGVLLSLYVSASLSYLLYS). The involved in apical transport and lipid raft association stretch occupies residues 13-35 (LTSGGVLLSLYVSASLSYLLYSD). Residues 35–465 (DILLRFSSKI…DTVTGVDMAL (431 aa)) lie on the Virion surface side of the membrane. A hypervariable stalk region region spans residues 38–85 (LRFSSKITAPTMTLDCANASNVQAVNRSATKEMTFLLPEPEWTYPRLS). N-linked (GlcNAc...) asparagine; by host glycans are attached at residues asparagine 55 and asparagine 63. 8 cysteine pairs are disulfide-bonded: cysteine 86–cysteine 419, cysteine 121–cysteine 126, cysteine 181–cysteine 228, cysteine 230–cysteine 235, cysteine 276–cysteine 290, cysteine 278–cysteine 288, cysteine 317–cysteine 336, and cysteine 423–cysteine 446. A head of neuraminidase region spans residues 88 to 465 (GSTFQKALLI…DTVTGVDMAL (378 aa)). Arginine 115 is a substrate binding site. A glycan (N-linked (GlcNAc...) asparagine; by host) is linked at asparagine 143. The Proton donor/acceptor role is filled by aspartate 148. A substrate-binding site is contributed by arginine 149. Residue 274 to 275 (EE) participates in substrate binding. N-linked (GlcNAc...) asparagine; by host glycosylation is present at asparagine 283. Position 291 (arginine 291) interacts with substrate. Positions 292 and 323 each coordinate Ca(2+). Positions 328 to 347 (DDGSITGPCESDGDKGRGGI) are disordered. A substrate-binding site is contributed by arginine 373. Tyrosine 408 serves as the catalytic Nucleophile.

The protein belongs to the glycosyl hydrolase 34 family. Homotetramer. Requires Ca(2+) as cofactor. Post-translationally, N-glycosylated.

It localises to the virion membrane. Its subcellular location is the host apical cell membrane. It catalyses the reaction Hydrolysis of alpha-(2-&gt;3)-, alpha-(2-&gt;6)-, alpha-(2-&gt;8)- glycosidic linkages of terminal sialic acid residues in oligosaccharides, glycoproteins, glycolipids, colominic acid and synthetic substrates.. Its activity is regulated as follows. Inhibited by the neuraminidase inhibitors zanamivir (Relenza) and oseltamivir (Tamiflu). These drugs interfere with the release of progeny virus from infected cells and are effective against all influenza strains. Resistance to neuraminidase inhibitors is quite rare. Its function is as follows. Catalyzes the removal of terminal sialic acid residues from viral and cellular glycoconjugates. Cleaves off the terminal sialic acids on the glycosylated HA during virus budding to facilitate virus release. Additionally helps virus spread through the circulation by further removing sialic acids from the cell surface. These cleavages prevent self-aggregation and ensure the efficient spread of the progeny virus from cell to cell. Otherwise, infection would be limited to one round of replication. Described as a receptor-destroying enzyme because it cleaves a terminal sialic acid from the cellular receptors. May facilitate viral invasion of the upper airways by cleaving the sialic acid moieties on the mucin of the airway epithelial cells. Likely to plays a role in the budding process through its association with lipid rafts during intracellular transport. May additionally display a raft-association independent effect on budding. Plays a role in the determination of host range restriction on replication and virulence. Sialidase activity in late endosome/lysosome traffic seems to enhance virus replication. This Influenza B virus (strain B/Memphis/3/1989) protein is Neuraminidase.